We begin with the raw amino-acid sequence, 121 residues long: Large ribosomal subunit protein bL12 (121 aa).

This sequence belongs to the bacterial ribosomal protein bL12 family. In terms of assembly, homodimer. Part of the ribosomal stalk of the 50S ribosomal subunit. Forms a multimeric L10(L12)X complex, where L10 forms an elongated spine to which 2 to 4 L12 dimers bind in a sequential fashion. Binds GTP-bound translation factors.

Forms part of the ribosomal stalk which helps the ribosome interact with GTP-bound translation factors. Is thus essential for accurate translation. This chain is Large ribosomal subunit protein bL12, found in Aeromonas hydrophila subsp. hydrophila (strain ATCC 7966 / DSM 30187 / BCRC 13018 / CCUG 14551 / JCM 1027 / KCTC 2358 / NCIMB 9240 / NCTC 8049).